A 605-amino-acid chain; its full sequence is Aspartate--tRNA(Asp/Asn) ligase (605 aa).

L-aspartate is bound at residue Glu-176. Residues 200-203 are aspartate; sequence QQFK. Residues Arg-222 and His-452 each coordinate L-aspartate. Position 222 to 224 (222 to 224) interacts with ATP; that stretch reads RDE. Residue Glu-490 participates in ATP binding. An L-aspartate-binding site is contributed by Arg-497. Residue 542–545 coordinates ATP; sequence GIDR.

The protein belongs to the class-II aminoacyl-tRNA synthetase family. Type 1 subfamily. In terms of assembly, homodimer.

It is found in the cytoplasm. The enzyme catalyses tRNA(Asx) + L-aspartate + ATP = L-aspartyl-tRNA(Asx) + AMP + diphosphate. Its function is as follows. Aspartyl-tRNA synthetase with relaxed tRNA specificity since it is able to aspartylate not only its cognate tRNA(Asp) but also tRNA(Asn). Reaction proceeds in two steps: L-aspartate is first activated by ATP to form Asp-AMP and then transferred to the acceptor end of tRNA(Asp/Asn). This is Aspartate--tRNA(Asp/Asn) ligase from Rickettsia prowazekii (strain Madrid E).